The sequence spans 202 residues: Snake venom metalloproteinase atroxlysin-1 (202 aa).

In terms of domain architecture, Peptidase M12B spans 6 to 202 (RYVDLFIVVD…ENPQCILNKR (197 aa)). D9 and D93 together coordinate Ca(2+). Disulfide bonds link C117/C197, C157/C181, and C159/C164. H142 is a binding site for Zn(2+). The active site involves E143. H146 and H152 together coordinate Zn(2+). Positions 197 and 200 each coordinate Ca(2+).

Belongs to the venom metalloproteinase (M12B) family. P-I subfamily. As to quaternary structure, monomer. Zn(2+) is required as a cofactor. In terms of tissue distribution, expressed by the venom gland.

The protein resides in the secreted. Inhibited by EDTA, DTT and high concentrations of zinc ions (&gt;2 mM). Weakly inhibited by TLCK. Not inhibited by PMSF. Activated by calcium ions. Its function is as follows. Snake venom zinc metalloproteinase that acts on fibrinogen, fibrin, fibronectin (FN1), type I collagen, type IV collagen, integrin alpha-7/beta-1 (ITGA7/ITGB1) and integrin alpha-1/beta-1 (ITGA1/ITGB1). Binds to fibronectin (FN1), fibrinogen and, weakly, to type I collagen and laminin. Cleaves Xaa-Leu bonds. Inhibits ADP- and collagen-induced platelet aggregation both in the presence (IC(50)=1.4 uM for collagen) and in the absence (IC(50)=2.2 uM for collagen) of cofactors. Has hemorrhagic activity. The polypeptide is Snake venom metalloproteinase atroxlysin-1 (Bothrops atrox (Barba amarilla)).